The following is a 309-amino-acid chain: GTP cyclohydrolase MptA (309 aa).

Belongs to the GTP cyclohydrolase IV family. As to quaternary structure, homodimer. Fe(2+) serves as cofactor.

It carries out the reaction GTP + H2O = 7,8-dihydroneopterin 2',3'-cyclic phosphate + formate + diphosphate + H(+). Its pathway is cofactor biosynthesis; 5,6,7,8-tetrahydromethanopterin biosynthesis. Functionally, converts GTP to 7,8-dihydro-D-neopterin 2',3'-cyclic phosphate, the first intermediate in the biosynthesis of coenzyme methanopterin. The sequence is that of GTP cyclohydrolase MptA from Methanococcus aeolicus (strain ATCC BAA-1280 / DSM 17508 / OCM 812 / Nankai-3).